The chain runs to 4717 residues: Midasin (4717 aa).

6 AAA-ATPase protomer regions span residues 149 to 384 (LVQK…FGAF), 458 to 797 (EQLA…GLRR), 871 to 1131 (EHYI…QEVI), 1157 to 1448 (SLKE…NACE), 1552 to 1811 (VLRA…EVFD), and 1858 to 2106 (VLES…FLLK). ATP contacts are provided by residues 159–166 (GPEGIGKK) and 474–481 (GETGTGKT). At Ser593 the chain carries Phosphoserine. ATP is bound by residues 901–908 (GPTSSGKT), 1193–1200 (GDTGCGKT), 1566–1573 (GSPGVGKT), and 1876–1883 (GDTATGKT). Residues 2173–3925 (KLLRKVLLTN…SGVGAEDITN (1753 aa)) form a linker region. 3 disordered regions span residues 3898–3924 (PQEG…EDIT), 3936–4283 (LANE…LGDH), and 4295–4365 (EWED…EVGD). Composition is skewed to acidic residues over residues 3936-3950 (LANE…DLDE) and 3973-3993 (ENSD…DIPE). Over residues 4020–4030 (NEQSAANNESD) the composition is skewed to polar residues. Residues 4031-4049 (LVSKEDDNKALEDKDRQEK) show a composition bias toward basic and acidic residues. Residues 4050 to 4066 (EDEEEMSDDVGIDDEIQ) show a composition bias toward acidic residues. Residues 4080-4103 (NEDHLDLPEDLKLDEKEGDVSKDS) show a composition bias toward basic and acidic residues. Composition is skewed to acidic residues over residues 4104 to 4177 (DLED…ESTE), 4184 to 4196 (EELE…EDQA), and 4226 to 4236 (ENEELGEEDGA). 2 stretches are compositionally biased toward basic and acidic residues: residues 4258-4275 (QKGE…EADR) and 4329-4342 (AEKD…RDES). A compositionally biased stretch (polar residues) spans 4343–4355 (ANQNPDSMNSTNI). The VWFA domain occupies 4505 to 4707 (QVMISIDDSK…ELPQLLSSAL (203 aa)).

It belongs to the midasin family. As to quaternary structure, associates with pre-60S ribosomes in the nucleoplasm.

It is found in the nucleus. Its subcellular location is the nucleolus. It localises to the nucleoplasm. Its function is as follows. Nuclear chaperone required for maturation and nuclear export of pre-60S ribosome subunits. Functions at successive maturation steps to remove ribosomal factors at critical transition points, first driving the exit of early pre-60S particles from the nucleolus and then driving late pre-60S particles from the nucleus. This is Midasin (mdn1) from Schizosaccharomyces pombe (strain 972 / ATCC 24843) (Fission yeast).